The sequence spans 195 residues: Imidazoleglycerol-phosphate dehydratase (195 aa).

This sequence belongs to the imidazoleglycerol-phosphate dehydratase family.

Its subcellular location is the cytoplasm. It carries out the reaction D-erythro-1-(imidazol-4-yl)glycerol 3-phosphate = 3-(imidazol-4-yl)-2-oxopropyl phosphate + H2O. It functions in the pathway amino-acid biosynthesis; L-histidine biosynthesis; L-histidine from 5-phospho-alpha-D-ribose 1-diphosphate: step 6/9. The protein is Imidazoleglycerol-phosphate dehydratase of Ruegeria pomeroyi (strain ATCC 700808 / DSM 15171 / DSS-3) (Silicibacter pomeroyi).